Reading from the N-terminus, the 118-residue chain is Large ribosomal subunit protein bL20 (118 aa).

It belongs to the bacterial ribosomal protein bL20 family.

Functionally, binds directly to 23S ribosomal RNA and is necessary for the in vitro assembly process of the 50S ribosomal subunit. It is not involved in the protein synthesizing functions of that subunit. This Kosmotoga olearia (strain ATCC BAA-1733 / DSM 21960 / TBF 19.5.1) protein is Large ribosomal subunit protein bL20.